We begin with the raw amino-acid sequence, 483 residues long: Argininosuccinate lyase (483 aa).

This sequence belongs to the lyase 1 family. Argininosuccinate lyase subfamily.

Its subcellular location is the cytoplasm. The enzyme catalyses 2-(N(omega)-L-arginino)succinate = fumarate + L-arginine. The protein operates within amino-acid biosynthesis; L-arginine biosynthesis; L-arginine from L-ornithine and carbamoyl phosphate: step 3/3. The sequence is that of Argininosuccinate lyase from Archaeoglobus fulgidus (strain ATCC 49558 / DSM 4304 / JCM 9628 / NBRC 100126 / VC-16).